The sequence spans 265 residues: MAALIRNLGARAAVAALSAKHVVPAAGSTALRMASTTPVEPKKADKPTVRQPDAVARSHLSDFGRYVAECLPKYVQKVQLTAGDELEVLIAPEGVVPVLQFLKDHHQAQFTNLVDIAGVDVPCRKNRFEVVYNLLSLRYNSRIRVKTYTDELTPLDSACEVHKAANWYEREIWDMYGVFFANHPDLRRILTDYGFEGHPQRRDFPLSGYVELRYDDEKKRVVCEPLELAQEFRKFDLSAPWEQFPNFRNANPPAEVVPPQAPAKK.

A mitochondrion-targeting transit peptide spans 1–33 (MAALIRNLGARAAVAALSAKHVVPAAGSTALRM).

The protein belongs to the complex I 30 kDa subunit family. Part of the mitochondrial membrane respiratory chain NADH dehydrogenase (Complex I). Interacts with sicily; interaction is stronger with unprocessed sicily protein.

It is found in the mitochondrion. It carries out the reaction a ubiquinone + NADH + 5 H(+)(in) = a ubiquinol + NAD(+) + 4 H(+)(out). In terms of biological role, core subunit of the mitochondrial membrane respiratory chain NADH dehydrogenase (Complex I) that is believed to belong to the minimal assembly required for catalysis. Complex I functions in the transfer of electrons from NADH to the respiratory chain. The immediate electron acceptor for the enzyme is believed to be ubiquinone. This Drosophila melanogaster (Fruit fly) protein is NADH dehydrogenase [ubiquinone] iron-sulfur protein 3, mitochondrial.